The sequence spans 137 residues: Cytochrome c2 (137 aa).

The first 21 residues, 1–21, serve as a signal peptide directing secretion; that stretch reads MKISLTAATVAALVLAAPAFA. Heme c is bound by residues Cys-34, Cys-37, His-38, and Met-117.

It belongs to the cytochrome c family. Post-translationally, binds 1 heme c group covalently per subunit.

Its function is as follows. Cytochrome c2 is found mainly in purple, non-sulfur, photosynthetic bacteria where it functions as the electron donor to the oxidized bacteriochlorophyll in the photophosphorylation pathway. However, it may also have a role in the respiratory chain and is found in some non-photosynthetic bacteria. In Rhodobacter capsulatus (strain ATCC BAA-309 / NBRC 16581 / SB1003), this protein is Cytochrome c2 (cycA).